The primary structure comprises 62 residues: DNA-directed RNA polymerase subunit Rpo10 (62 aa).

Zn(2+)-binding residues include C6, C9, C43, and C44.

The protein belongs to the archaeal Rpo10/eukaryotic RPB10 RNA polymerase subunit family. As to quaternary structure, part of the RNA polymerase complex. Zn(2+) is required as a cofactor.

Its subcellular location is the cytoplasm. It catalyses the reaction RNA(n) + a ribonucleoside 5'-triphosphate = RNA(n+1) + diphosphate. Its function is as follows. DNA-dependent RNA polymerase (RNAP) catalyzes the transcription of DNA into RNA using the four ribonucleoside triphosphates as substrates. This chain is DNA-directed RNA polymerase subunit Rpo10, found in Methanosphaerula palustris (strain ATCC BAA-1556 / DSM 19958 / E1-9c).